Here is a 299-residue protein sequence, read N- to C-terminus: Diphthine methyl ester synthase 1 (299 aa).

S-adenosyl-L-methionine contacts are provided by residues Leu-9, Asp-85, Gly-88, 113–114 (SV), Leu-164, Leu-222, and His-247.

Belongs to the diphthine synthase family.

The protein resides in the cytoplasm. It catalyses the reaction 2-[(3S)-amino-3-carboxypropyl]-L-histidyl-[translation elongation factor 2] + 4 S-adenosyl-L-methionine = diphthine methyl ester-[translation elongation factor 2] + 4 S-adenosyl-L-homocysteine + 3 H(+). It participates in protein modification; peptidyl-diphthamide biosynthesis. Its function is as follows. S-adenosyl-L-methionine-dependent methyltransferase that catalyzes four methylations of the modified target histidine residue in translation elongation factor 2 (EF-2), to form an intermediate called diphthine methyl ester. The four successive methylation reactions represent the second step of diphthamide biosynthesis. The sequence is that of Diphthine methyl ester synthase 1 (DPH5) from Candida albicans (strain SC5314 / ATCC MYA-2876) (Yeast).